A 436-amino-acid polypeptide reads, in one-letter code: 3-ketoacyl-CoA thiolase (436 aa).

Cys99 serves as the catalytic Acyl-thioester intermediate. Residues His392 and Cys422 each act as proton acceptor in the active site.

This sequence belongs to the thiolase-like superfamily. Thiolase family. Heterotetramer of two alpha chains (FadJ) and two beta chains (FadI).

It localises to the cytoplasm. The catalysed reaction is an acyl-CoA + acetyl-CoA = a 3-oxoacyl-CoA + CoA. Its pathway is lipid metabolism; fatty acid beta-oxidation. Its function is as follows. Catalyzes the final step of fatty acid oxidation in which acetyl-CoA is released and the CoA ester of a fatty acid two carbons shorter is formed. The polypeptide is 3-ketoacyl-CoA thiolase (Escherichia coli O9:H4 (strain HS)).